The primary structure comprises 1218 residues: Protein STICHEL (1218 aa).

Residues 24–136 are disordered; sequence AGRVLRDPGT…SDARNGGDSY (113 aa). Polar residues-rich tracts occupy residues 32–46, 54–73, and 86–95; these read GTTS…SSRS, ASRN…SSTN, and WKTQKSSSEK. Positions 163 to 180 match the Bipartite nuclear localization signal motif; that stretch reads RKSNVGSCKKKSKKKISS. 2 short sequence motifs (PEST) span residues 273 to 304 and 425 to 449; these read RNPS…LPGR and RSQD…ETIR. 490–497 lines the ATP pocket; it reads GPRGTGKT. Zn(2+) contacts are provided by Cys509, Cys518, Cys521, and Cys524. Residues 762 to 788 are a coiled coil; sequence EADMEGLKHALKLLSEAEKQLRVSNDR. The interval 802 to 828 is disordered; it reads MPSPGTTHTGSSRRQSSRATDDDPASV. Over residues 804-819 the composition is skewed to polar residues; sequence SPGTTHTGSSRRQSSR. 2 consecutive short sequence motifs (bipartite nuclear localization signal) follow at residues 1178-1195 and 1196-1213; these read RRSK…SRRN and RKSR…RKAE.

The protein belongs to the DnaX/STICHEL family. Interacts with BLT. As to expression, ubiquitous.

It localises to the nucleus. Functionally, acts as a key regulator of trichome branching through an endoreduplication-independent pathway. In Arabidopsis thaliana (Mouse-ear cress), this protein is Protein STICHEL (STI).